The primary structure comprises 116 residues: Nitrogenase iron-iron protein delta chain (116 aa).

In terms of assembly, hexamer of two alpha, two beta, and two delta chains. It depends on iron-sulfur cluster as a cofactor.

The enzyme catalyses N2 + 8 reduced [2Fe-2S]-[ferredoxin] + 16 ATP + 16 H2O = H2 + 8 oxidized [2Fe-2S]-[ferredoxin] + 2 NH4(+) + 16 ADP + 16 phosphate + 6 H(+). Its function is as follows. The key enzymatic reactions in nitrogen fixation are catalyzed by the nitrogenase complex, which has 2 components: the iron protein (component 2) and a component 1 which is either a molybdenum-iron protein, a vanadium-iron, or an iron-iron protein. The sequence is that of Nitrogenase iron-iron protein delta chain (anfG) from Clostridium pasteurianum.